The chain runs to 449 residues: MMLSTEGREGFVVKVRGLPWSCSADEVMRFFSDCKIQNGTSGIRFIYTREGRPSGEAFVELESEEEVKLALKKDRETMGHRYVEVFKSNSVEMDWVLKHTGPNSPDTANDGFVRLRGLPFGCSKEEIVQFFSGLEIVPNGMTLPVDFQGRSTGEAFVQFASQEIAEKALKKHKERIGHRYIEIFKSSRAEVRTHYDPPRKLMAMQRPGPYDRPGAGRGYNSIGRGAGFERMRRGAYGGGYGGYDDYGGYNDGYGFGSDRFGRDLNYCFSGMSDHRYGDGGSSFQSTTGHCVHMRGLPYRATENDIYNFFSPLNPMRVHIEIGPDGRVTGEADVEFATHEDAVAAMAKDKANMQHRYVELFLNSTAGTSGGAYDHSYVELFLNSTAGASGGAYGSQMMGGMGLSNQSSYGGPASQQLSGGYGGGYGGQSSMSGYDQVLQENSSDYQSNLA.

At Met1 the chain carries N-acetylmethionine. Met2 carries the post-translational modification N-acetylmethionine; in Heterogeneous nuclear ribonucleoprotein H2, N-terminally processed. In terms of domain architecture, RRM 1 spans 11 to 90 (FVVKVRGLPW…RYVEVFKSNS (80 aa)). At Ser23 the chain carries Phosphoserine. Lys35 is covalently cross-linked (Glycyl lysine isopeptide (Lys-Gly) (interchain with G-Cter in SUMO2)). Phosphoserine is present on residues Ser54 and Ser63. Lys87 participates in a covalent cross-link: Glycyl lysine isopeptide (Lys-Gly) (interchain with G-Cter in SUMO2). Ser90 carries the post-translational modification Phosphoserine. Residue Lys98 forms a Glycyl lysine isopeptide (Lys-Gly) (interchain with G-Cter in SUMO2) linkage. The RRM 2 domain maps to 111–188 (GFVRLRGLPF…RYIEIFKSSR (78 aa)). Arg233 is modified (dimethylated arginine; alternate). An Omega-N-methylarginine; alternate modification is found at Arg233. The 1-1 repeat unit spans residues 234-249 (GAYGGGYGGYDDYGGY). The interval 234 to 433 (GAYGGGYGGY…YGGQSSMSGY (200 aa)) is 2 X 16 AA Gly-rich approximate repeats. Tyr246 bears the Phosphotyrosine mark. The 76-residue stretch at 289–364 (HCVHMRGLPY…RYVELFLNST (76 aa)) folds into the RRM 3 domain. Phosphoserine is present on Ser310. 3 consecutive repeat copies span residues 354-372 (HRYVELFLNSTAGTSGGAY), 374-392 (HSYVELFLNSTAGASGGAY), and 418-433 (GGYGGGYGGQSSMSGY). The segment at 354–392 (HRYVELFLNSTAGTSGGAYDHSYVELFLNSTAGASGGAY) is 2 X 19 AA perfect repeats.

Component of a ribonucleoprotein complex containing mRNAs and RNA-binding proteins including DDX5, HNRNPH2 and SRSF1 as well as splicing regulator ARVCF. Interacts with TXNL4/DIM1. In terms of tissue distribution, expressed ubiquitously.

Its subcellular location is the nucleus. The protein localises to the nucleoplasm. Functionally, this protein is a component of the heterogeneous nuclear ribonucleoprotein (hnRNP) complexes which provide the substrate for the processing events that pre-mRNAs undergo before becoming functional, translatable mRNAs in the cytoplasm. Binds poly(RG). The polypeptide is Heterogeneous nuclear ribonucleoprotein H2 (HNRNPH2) (Homo sapiens (Human)).